The chain runs to 162 residues: Large ribosomal subunit protein uL10 (162 aa).

It belongs to the universal ribosomal protein uL10 family. As to quaternary structure, part of the ribosomal stalk of the 50S ribosomal subunit. The N-terminus interacts with L11 and the large rRNA to form the base of the stalk. The C-terminus forms an elongated spine to which L12 dimers bind in a sequential fashion forming a multimeric L10(L12)X complex.

Functionally, forms part of the ribosomal stalk, playing a central role in the interaction of the ribosome with GTP-bound translation factors. The protein is Large ribosomal subunit protein uL10 of Vibrio vulnificus (strain CMCP6).